Reading from the N-terminus, the 757-residue chain is Lysyl oxidase homolog 4 (757 aa).

Residues 1-25 (MWFLPAALPLLPLLLLLGQAPPSRP) form the signal peptide. 4 SRCR domains span residues 33–134 (LRLV…VVCN), 160–288 (VRLK…VSCV), 312–412 (VRLR…VRCN), and 422–530 (VRLA…VSCT). Cystine bridges form between C59-C123, C72-C133, C103-C113, C192-C277, C205-C287, C252-C262, C337-C401, C350-C411, C381-C391, C451-C516, C464-C529, C498-C508, C559-C565, C611-C659, C643-C649, C671-C681, and C718-C732. N-linked (GlcNAc...) asparagine glycosylation occurs at N199. The interval 534-737 (PDLVMNAQLV…WLHNCHTGDS (204 aa)) is lysyl-oxidase like. Residues H612, H614, and H616 each contribute to the Cu cation site. N-linked (GlcNAc...) asparagine glycosylation occurs at N630. A cross-link (lysine tyrosylquinone (Lys-Tyr)) is located at residues 639–675 (KASFCLEDTNCPTGMQRRYACANFGEQGVTVGCWDTY). Position 675 is a 2',4',5'-topaquinone (Y675).

It belongs to the lysyl oxidase family. It depends on Cu cation as a cofactor. Requires lysine tyrosylquinone residue as cofactor. The lysine tyrosylquinone cross-link (LTQ) is generated by condensation of the epsilon-amino group of a lysine with a topaquinone produced by oxidation of tyrosine. In terms of processing, may be proteolytically cleaved by BMP1.

The protein localises to the secreted. Its subcellular location is the extracellular space. It carries out the reaction L-lysyl-[protein] + O2 + H2O = (S)-2-amino-6-oxohexanoyl-[protein] + H2O2 + NH4(+). Catalyzes the oxidative deamination of lysine and hydroxylysine residues in collagen and elastin, resulting in the formation of covalent cross-linkages, and the stabilization of collagen and elastin fibers. The protein is Lysyl oxidase homolog 4 (LOXL4) of Bos taurus (Bovine).